We begin with the raw amino-acid sequence, 183 residues long: Acireductone dioxygenase (183 aa).

Fe(2+) is bound by residues His-99, His-101, Glu-105, and His-144. Residues His-99, His-101, Glu-105, and His-144 each contribute to the Ni(2+) site.

This sequence belongs to the acireductone dioxygenase (ARD) family. Monomer. It depends on Fe(2+) as a cofactor. The cofactor is Ni(2+).

It carries out the reaction 1,2-dihydroxy-5-(methylsulfanyl)pent-1-en-3-one + O2 = 3-(methylsulfanyl)propanoate + CO + formate + 2 H(+). The enzyme catalyses 1,2-dihydroxy-5-(methylsulfanyl)pent-1-en-3-one + O2 = 4-methylsulfanyl-2-oxobutanoate + formate + 2 H(+). It functions in the pathway amino-acid biosynthesis; L-methionine biosynthesis via salvage pathway; L-methionine from S-methyl-5-thio-alpha-D-ribose 1-phosphate: step 5/6. Catalyzes 2 different reactions between oxygen and the acireductone 1,2-dihydroxy-3-keto-5-methylthiopentene (DHK-MTPene) depending upon the metal bound in the active site. Fe-containing acireductone dioxygenase (Fe-ARD) produces formate and 2-keto-4-methylthiobutyrate (KMTB), the alpha-ketoacid precursor of methionine in the methionine recycle pathway. Ni-containing acireductone dioxygenase (Ni-ARD) produces methylthiopropionate, carbon monoxide and formate, and does not lie on the methionine recycle pathway. The polypeptide is Acireductone dioxygenase (Microcystis aeruginosa (strain NIES-843 / IAM M-2473)).